We begin with the raw amino-acid sequence, 417 residues long: Serine hydroxymethyltransferase (417 aa).

(6S)-5,6,7,8-tetrahydrofolate-binding positions include Leu112 and Gly116–Leu118. Lys221 is subject to N6-(pyridoxal phosphate)lysine. Glu247 is a (6S)-5,6,7,8-tetrahydrofolate binding site.

It belongs to the SHMT family. Homodimer. It depends on pyridoxal 5'-phosphate as a cofactor.

The protein localises to the cytoplasm. It catalyses the reaction (6R)-5,10-methylene-5,6,7,8-tetrahydrofolate + glycine + H2O = (6S)-5,6,7,8-tetrahydrofolate + L-serine. The protein operates within one-carbon metabolism; tetrahydrofolate interconversion. It functions in the pathway amino-acid biosynthesis; glycine biosynthesis; glycine from L-serine: step 1/1. Catalyzes the reversible interconversion of serine and glycine with tetrahydrofolate (THF) serving as the one-carbon carrier. This reaction serves as the major source of one-carbon groups required for the biosynthesis of purines, thymidylate, methionine, and other important biomolecules. Also exhibits THF-independent aldolase activity toward beta-hydroxyamino acids, producing glycine and aldehydes, via a retro-aldol mechanism. The sequence is that of Serine hydroxymethyltransferase from Borrelia recurrentis (strain A1).